The following is a 1001-amino-acid chain: Sarcoplasmic/endoplasmic reticulum calcium ATPase 1 (1001 aa).

The Cytoplasmic segment spans residues 1-48 (MEAAHSKSTEECLAYFGVSETTGLTPDQVKRHLEKYGHNELPAEEGKS). The chain crosses the membrane as a helical span at residues 49–69 (LWELVIEQFEDLLVRILLLAA). Residues 70–89 (CISFVLAWFEEGEETITAFV) are Lumenal-facing. The chain crosses the membrane as a helical span at residues 90-110 (EPFVILLILIANAIVGVWQER). Residues 111 to 253 (NAENAIEALK…QDKTPLQQKL (143 aa)) lie on the Cytoplasmic side of the membrane. A helical transmembrane segment spans residues 254–273 (DEFGEQLSKVISLICVAVWL). Residues 274–295 (INIGHFNDPVHGGSWIRGAIYY) lie on the Lumenal side of the membrane. The chain crosses the membrane as a helical span at residues 296-313 (FKIAVALAVAAIPEGLPA). The Ca(2+) site is built by V304, A305, I307, and E309. The Cytoplasmic segment spans residues 314-757 (VITTCLALGT…EEGRAIYNNM (444 aa)). D351 (4-aspartylphosphate intermediate) is an active-site residue. The Mg(2+) site is built by D351 and T353. Residue T353 coordinates ATP. T441 carries the phosphothreonine modification. Residues E442, R489, K515, and R560 each coordinate ATP. Residue T569 is modified to Phosphothreonine. Residue S581 is modified to Phosphoserine. T625, G626, D627, R678, and K684 together coordinate ATP. D703 contributes to the Mg(2+) binding site. Position 706 (N706) interacts with ATP. A helical membrane pass occupies residues 758–777 (KQFIRYLISSNVGEVVCIFL). Ca(2+) contacts are provided by N768 and E771. The Lumenal segment spans residues 778-787 (TAALGLPEAL). The helical transmembrane segment at 788 to 808 (IPVQLLWVNLVTDGLPATALG) threads the bilayer. Residues 788–808 (IPVQLLWVNLVTDGLPATALG) are interaction with PLN. Ca(2+) contacts are provided by N796, T799, and D800. Residues 809-828 (FNPPDLDIMDRPPRSPKEPL) are Cytoplasmic-facing. Residues 829-851 (ISGWLFFRYMAIGGYVGAATVGA) traverse the membrane as a helical segment. At 852–897 (AAWWFMYAEDGPGVTYHQLTHFMQCTEDHPHFEGLDCEIFEAPEPM) the chain is on the lumenal side. An intrachain disulfide couples C876 to C888. The helical transmembrane segment at 898–917 (TMALSVLVTIEMCNALNSLS) threads the bilayer. Residue E908 coordinates Ca(2+). Residues 918–930 (ENQSLMRMPPWVN) are Cytoplasmic-facing. A helical transmembrane segment spans residues 931–949 (IWLLGSICLSMSLHFLILY). Positions 932-943 (WLLGSICLSMSL) are interaction with PLN. Topologically, residues 950–964 (VDPLPMIFKLKALDL) are lumenal. A helical transmembrane segment spans residues 965–985 (TQWLMVLKISLPVIGLDEILK). Residues 986 to 1001 (FIARNYLEDPEDERRK) are Cytoplasmic-facing.

Belongs to the cation transport ATPase (P-type) (TC 3.A.3) family. Type IIA subfamily. In terms of assembly, interacts with sarcolipin (SLN). Interacts with phospholamban (PLN). Interacts with myoregulin (MRLN). Interacts with DWORF. Interacts with VMP1. Requires Mg(2+) as cofactor. Skeletal muscle (at protein level). Skeletal muscle, fast twitch muscle (type II) fibers.

Its subcellular location is the endoplasmic reticulum membrane. The protein localises to the sarcoplasmic reticulum membrane. It catalyses the reaction Ca(2+)(in) + ATP + H2O = Ca(2+)(out) + ADP + phosphate + H(+). With respect to regulation, inhibited by sarcolipin (SLN) and myoregulin (MRLN). Has also been shown to be reversibly inhibited by phospholamban (PLN) at low calcium concentrations in vitro. Dephosphorylated PLN decreases the apparent affinity of the ATPase for calcium and this inhibition is regulated by the phosphorylation of PLN in vitro. Enhanced by DWORF; DWORF increases activity by displacing sarcolipin (SLN), phospholamban (PLN) and myoregulin (MRLN). In terms of biological role, key regulator of striated muscle performance by acting as the major Ca(2+) ATPase responsible for the reuptake of cytosolic Ca(2+) into the sarcoplasmic reticulum. Catalyzes the hydrolysis of ATP coupled with the translocation of calcium from the cytosol to the sarcoplasmic reticulum lumen. Contributes to calcium sequestration involved in muscular excitation/contraction. This chain is Sarcoplasmic/endoplasmic reticulum calcium ATPase 1 (ATP2A1), found in Oryctolagus cuniculus (Rabbit).